Consider the following 162-residue polypeptide: Interleukin-15 (162 aa).

The first 29 residues, 1–29 (MRILKPYLRSTSIQCYLCLLLNSHFLTEA), serve as a signal peptide directing secretion. A propeptide spanning residues 30 to 48 (GIHVFILGCISAGLPKTEA) is cleaved from the precursor. 2 cysteine pairs are disulfide-bonded: Cys-83-Cys-133 and Cys-90-Cys-136. N-linked (GlcNAc...) asparagine glycans are attached at residues Asn-113, Asn-121, and Asn-127.

It belongs to the IL-15/IL-21 family.

Its subcellular location is the secreted. In terms of biological role, cytokine that plays a major role in the development of inflammatory and protective immune responses to microbial invaders and parasites by modulating immune cells of both the innate and adaptive immune systems. Stimulates the proliferation of natural killer cells, T-cells and B-cells and promotes the secretion of several cytokines. In monocytes, induces the production of IL8 and monocyte chemotactic protein 1/CCL2, two chemokines that attract neutrophils and monocytes respectively to sites of infection. Unlike most cytokines, which are secreted in soluble form, IL15 is expressed in association with its high affinity IL15RA on the surface of IL15-producing cells and delivers signals to target cells that express IL2RB and IL2RG receptor subunits. Binding to its receptor triggers the phosphorylation of JAK1 and JAK3 and the recruitment and subsequent phosphorylation of signal transducer and activator of transcription-3/STAT3 and STAT5. In mast cells, induces the rapid tyrosine phosphorylation of STAT6 and thereby controls mast cell survival and release of cytokines such as IL4. This Bubalus bubalis (Domestic water buffalo) protein is Interleukin-15 (IL15).